The following is a 182-amino-acid chain: Large ribosomal subunit protein uL10 (182 aa).

It belongs to the universal ribosomal protein uL10 family. As to quaternary structure, part of the ribosomal stalk of the 50S ribosomal subunit. The N-terminus interacts with L11 and the large rRNA to form the base of the stalk. The C-terminus forms an elongated spine to which L12 dimers bind in a sequential fashion forming a multimeric L10(L12)X complex.

Functionally, forms part of the ribosomal stalk, playing a central role in the interaction of the ribosome with GTP-bound translation factors. The protein is Large ribosomal subunit protein uL10 of Leptothrix cholodnii (strain ATCC 51168 / LMG 8142 / SP-6) (Leptothrix discophora (strain SP-6)).